The following is a 1196-amino-acid chain: MPPKKFKDLNSFLDDQPKDPNLVASPFGGYFKNPAADAGSNNASKKSSYQQQRNWKQGGNYQQGGYQSYNSNYNNYNNYNNYNNYNNYNNYNKYNGQGYQKSTYKQSAVTPNQSGTPTPSASTTSLTSLNEKLSNLELTPISQFLSKIPECQSITDCKNQIKLIIEEFGKEGNSTGEKIEEWKIVDVLSKFIKPKNPSLVRESAMLIISNIAQFFSGKPPQEAYLLPFFNVALDCISDKENTVKRAAQHAIDSLLNCFPMEALTCFVLPTILDYLSSGAKWQAKMAALSVVDRIREDSANDLLELTFKDAVPVLTDVATDFKPELAKQGYKTLLDYVSILDNLDLSPRYKLIVDTLQDPSKVPESVKSLSSVTFVAEVTEPSLSLLVPILNRSLNLSSSSQEQLRQTVIVVENLTRLVNNRNEIESFIPLLLPGIQKVVDTASLPEVRELAEKALNVLKEDDEADKENKFSGRLTLEEGRDFLLDHLKDIKADDSCFVKPYMNDETVIKYMSKILTVDSNVNDWKRLEDFLTAVFGGSDSQREFVKQDFIHNLRALFYQEKERADEDEGIEIVNTDFSLAYGSRMLLNKTNLRLLKGHRYGLCGRNGAGKSTLMRAIANGQLDGFPDKDTLRTCFVEHKLQGEEGDLDLVSFIALDEELQSTSREEIAAALESVGFDEERRAQTVGSLSGGWKMKLELARAMLQKADILLLDEPTNHLDVSNVKWLEEYLLEHTDITSLIVSHDSGFLDTVCTDIIHYENKKLAYYKGNLAAFVEQKPEAKSYYTLTDSNAQMRFPPPGILTGVKSNTRAVAKMTDVTFSYPGAQKPSLSHVSCSLSLSSRVACLGPNGAGKSTLIKLLTGELVPNEGKVEKHPNLRIGYIAQHALQHVNEHKEKTANQYLQWRYQFGDDREVLLKESRKISEDEKEMMTKEIDIDDGRGKRAIEAIVGRQKLKKSFQYEVKWKYWKPKYNSWVPKDVLVEHGFEKLVQKFDDHEASREGLGYRELIPSVITKHFEDVGLDSEIANHTPLGSLSGGQLVKVVIAGAMWNNPHLLVLDEPTNYLDRDSLGALAVAIRDWSGGVVMISHNNEFVGALCPEQWIVENGKMVQKGSAQVDQSKFEDGGNADAVGLKASNLAKPSVDDDDSPANIKVKQRKKRLTRNEKKLQAERRRLRYIEWLSSPKGTPKPVDTDDEED.

Disordered regions lie at residues 1–49 and 103–125; these read MPPK…KSSY and TYKQ…STTS. 2 stretches are compositionally biased toward polar residues: residues 39-49 and 103-113; these read GSNNASKKSSY and TYKQSAVTPNQ. A compositionally biased stretch (low complexity) spans 114–125; sequence SGTPTPSASTTS. Ser-443 is subject to Phosphoserine. ABC transporter domains lie at 570–786 and 812–1129; these read IEIV…YYTL and AKMT…ADAV. ATP contacts are provided by residues 604–611 and 846–853; these read GRNGAGKS and GPNGAGKS. Residues 942 to 1003 form the Chromo domain; it reads RAIEAIVGRQ…HEASREGLGY (62 aa). 2 disordered regions span residues 1137–1166 and 1177–1196; these read AKPS…EKKL and EWLS…DEED. The residue at position 1191 (Thr-1191) is a Phosphothreonine.

Belongs to the ABC transporter superfamily. ABCF family. EF3 subfamily.

It localises to the cytoplasm. The protein resides in the nucleus. In terms of biological role, may be involved in the mRNA export process. Forms the [NU+] prion and induces [PSI+] prion formation. The protein is [NU+] prion formation protein 1 (NEW1) of Saccharomyces cerevisiae (strain ATCC 204508 / S288c) (Baker's yeast).